Here is an 861-residue protein sequence, read N- to C-terminus: DNA mismatch repair protein MutS (861 aa).

609–616 (GPNMAGKS) contacts ATP.

Belongs to the DNA mismatch repair MutS family.

In terms of biological role, this protein is involved in the repair of mismatches in DNA. It is possible that it carries out the mismatch recognition step. This protein has a weak ATPase activity. In Borrelia hermsii (strain HS1 / DAH), this protein is DNA mismatch repair protein MutS.